A 388-amino-acid polypeptide reads, in one-letter code: Glucose-6-phosphate/phosphate translocator 2, chloroplastic (388 aa).

Residues 1-68 constitute a chloroplast transit peptide; sequence MLSSIKPSSS…SASNFKREVK (68 aa). Helical transmembrane passes span 95-115, 122-142, 158-178, 211-231, 233-253, 281-301, 305-325, and 358-378; these read LKIG…NIYN, FPYP…MMLV, FWKT…AATV, FPLP…LAAI, ELNF…AFVF, LVIL…AAGW, VSQV…FYHL, and IIIF…IAIF. The region spanning 113–231 is the EamA domain; it reads IYNKKVLNAF…IIGGCALAAI (119 aa).

The protein belongs to the TPT transporter family. GPT (TC 2.A.7.9) subfamily. In terms of tissue distribution, expressed in seeds, flowers, stamens, and rosette leaves, with highest levels found in sepals and senescing leaves.

Its subcellular location is the plastid. It localises to the chloroplast membrane. Its function is as follows. Glucose 6-phosphate (Glc6P) transporter. Also transports inorganic phosphate, 3-phosphoglycerate, triose phosphates and, to a leser extent, phosphoenolpyruvate. Responsible for the transport of Glc6P into plastids of heterotrophic tissues where it can be used as a carbon source for starch biosynthesis, as substrate for fatty acid biosynthesis or as substrate for NADPH generation via the oxidative pentose phosphate pathway (OPPP). Required for dynamic acclimation of photosynthesis and partitioning of Glc6P between the chloroplast and the cytosol. May modulate the sensing of sugar status during early seedling development. The sequence is that of Glucose-6-phosphate/phosphate translocator 2, chloroplastic from Arabidopsis thaliana (Mouse-ear cress).